Reading from the N-terminus, the 240-residue chain is Endonuclease NucS 1 (240 aa).

It belongs to the NucS endonuclease family.

It localises to the cytoplasm. Cleaves both 3' and 5' ssDNA extremities of branched DNA structures. This chain is Endonuclease NucS 1, found in Halobacterium salinarum (strain ATCC 700922 / JCM 11081 / NRC-1) (Halobacterium halobium).